The following is a 417-amino-acid chain: Actin-related protein 10 (417 aa).

This sequence belongs to the actin family. In terms of assembly, subunit of dynactin, a multiprotein complex part of a tripartite complex with dynein and a adapter, such as BICDL1, BICD2 or HOOK3. The dynactin complex is built around ACTR1A/ACTB filament and consists of an actin-related filament composed of a shoulder domain, a pointed end and a barbed end. Its length is defined by its flexible shoulder domain. The soulder is composed of 2 DCTN1 subunits, 4 DCTN2 and 2 DCTN3. The 4 DCNT2 (via N-terminus) bind the ACTR1A filament and act as molecular rulers to determine the length. The pointed end is important for binding dynein-dynactin cargo adapters. Consists of 4 subunits: ACTR10, DCNT4, DCTN5 and DCTN6. The barbed end is composed of a CAPZA1:CAPZB heterodimers, which binds ACTR1A/ACTB filament and dynactin and stabilizes dynactin.

The protein resides in the cytoplasm. It is found in the cytoskeleton. Part of the dynactin complex that activates the molecular motor dynein for ultra-processive transport along microtubules. The protein is Actin-related protein 10 (Actr10) of Mus musculus (Mouse).